The sequence spans 145 residues: Large ribosomal subunit protein mL59 (145 aa).

A compositionally biased stretch (basic and acidic residues) spans Leu123–Lys135. The segment at Leu123–Phe145 is disordered.

This sequence belongs to the mitochondrion-specific ribosomal protein mL59 family. Component of the mitochondrial large ribosomal subunit (mt-LSU). Mature yeast 74S mitochondrial ribosomes consist of a small (37S) and a large (54S) subunit. The 37S small subunit contains a 15S ribosomal RNA (15S mt-rRNA) and at least 32 different proteins. The 54S large subunit contains a 21S rRNA (21S mt-rRNA) and at least 45 different proteins.

Its subcellular location is the mitochondrion. Component of the mitochondrial ribosome (mitoribosome), a dedicated translation machinery responsible for the synthesis of mitochondrial genome-encoded proteins, including at least some of the essential transmembrane subunits of the mitochondrial respiratory chain. The mitoribosomes are attached to the mitochondrial inner membrane and translation products are cotranslationally integrated into the membrane. The protein is Large ribosomal subunit protein mL59 (mrpl25) of Schizosaccharomyces pombe (strain 972 / ATCC 24843) (Fission yeast).